The sequence spans 354 residues: Magnesium-protoporphyrin IX monomethyl ester [oxidative] cyclase 2 (354 aa).

This sequence belongs to the AcsF family. Fe cation serves as cofactor.

The enzyme catalyses Mg-protoporphyrin IX 13-monomethyl ester + 3 NADPH + 3 O2 + 2 H(+) = 3,8-divinyl protochlorophyllide a + 3 NADP(+) + 5 H2O. The protein operates within porphyrin-containing compound metabolism; chlorophyll biosynthesis (light-independent). Its function is as follows. Catalyzes the formation of the isocyclic ring in chlorophyll biosynthesis. Mediates the cyclase reaction, which results in the formation of divinylprotochlorophyllide (Pchlide) characteristic of all chlorophylls from magnesium-protoporphyrin IX 13-monomethyl ester (MgPMME). The chain is Magnesium-protoporphyrin IX monomethyl ester [oxidative] cyclase 2 from Thermosynechococcus vestitus (strain NIES-2133 / IAM M-273 / BP-1).